Consider the following 481-residue polypeptide: Zygotic gap protein knirps (481 aa).

A DNA-binding region (nuclear receptor) is located at residues 2-78 (NQTCKVCGEP…VGMSKGGSRY (77 aa)). 2 NR C4-type zinc fingers span residues 5-25 (CKVC…CEGC) and 42-66 (CKND…LRKC). Composition is skewed to low complexity over residues 100–111 (AAAGKAPGHATG), 127–148 (QQQQ…QQQQ), 245–264 (TPPT…AASP), 316–335 (SHSS…SPLS), and 420–440 (TTNS…TSST). Disordered stretches follow at residues 100-161 (AAAG…GYTG), 231-294 (SVDS…PHTI), 308-336 (LLPG…PLSF), and 420-442 (TTNS…STEA).

It belongs to the nuclear hormone receptor family. NR0 subfamily.

The protein resides in the nucleus. Its function is as follows. Transcriptional repressor. Binds to multiple sites in the eve stripe 3 enhancer element. Plays an essential role in the segmentation process both by refining the expression patterns of gap genes and by establishing pair-rules stripes of gene expression. This chain is Zygotic gap protein knirps (kni), found in Drosophila virilis (Fruit fly).